We begin with the raw amino-acid sequence, 600 residues long: Proline--tRNA ligase (600 aa).

Belongs to the class-II aminoacyl-tRNA synthetase family. ProS type 1 subfamily. In terms of assembly, homodimer.

The protein localises to the cytoplasm. The enzyme catalyses tRNA(Pro) + L-proline + ATP = L-prolyl-tRNA(Pro) + AMP + diphosphate. Catalyzes the attachment of proline to tRNA(Pro) in a two-step reaction: proline is first activated by ATP to form Pro-AMP and then transferred to the acceptor end of tRNA(Pro). As ProRS can inadvertently accommodate and process non-cognate amino acids such as alanine and cysteine, to avoid such errors it has two additional distinct editing activities against alanine. One activity is designated as 'pretransfer' editing and involves the tRNA(Pro)-independent hydrolysis of activated Ala-AMP. The other activity is designated 'posttransfer' editing and involves deacylation of mischarged Ala-tRNA(Pro). The misacylated Cys-tRNA(Pro) is not edited by ProRS. In Synechococcus sp. (strain ATCC 27144 / PCC 6301 / SAUG 1402/1) (Anacystis nidulans), this protein is Proline--tRNA ligase.